Here is a 490-residue protein sequence, read N- to C-terminus: Serine hydroxymethyltransferase, mitochondrial (490 aa).

The transit peptide at 1-20 directs the protein to the mitochondrion; sequence MFPRASALAKCMATVHRRGL. Lysine 265 is subject to N6-(pyridoxal phosphate)lysine.

This sequence belongs to the SHMT family. As to quaternary structure, homotetramer. Interacts with NAP1. Pyridoxal 5'-phosphate serves as cofactor.

It localises to the mitochondrion. The catalysed reaction is (6R)-5,10-methylene-5,6,7,8-tetrahydrofolate + glycine + H2O = (6S)-5,6,7,8-tetrahydrofolate + L-serine. The protein operates within one-carbon metabolism; tetrahydrofolate interconversion. Functionally, interconversion of serine and glycine. This chain is Serine hydroxymethyltransferase, mitochondrial (SHM1), found in Saccharomyces cerevisiae (strain ATCC 204508 / S288c) (Baker's yeast).